Consider the following 125-residue polypeptide: Flagellar protein FliT (125 aa).

The interval 1 to 50 is required for homodimerization; sequence MDNKMDLLSAYQRILSLSEQMLNLAKNEKWDELVDMEITYLKAVEVISHS. The tract at residues 60–98 is fliD binding; sequence LQQKMTNILQIILDNENEIKKLLQKRLDELSKLIKQASQ.

It belongs to the FliT family. Homodimer. Interacts with FliD and FlhC.

It is found in the cytoplasm. The protein resides in the cytosol. Dual-function protein that regulates the transcription of class 2 flagellar operons and that also acts as an export chaperone for the filament-capping protein FliD. As a transcriptional regulator, acts as an anti-FlhDC factor; it directly binds FlhC, thus inhibiting the binding of the FlhC/FlhD complex to class 2 promoters, resulting in decreased expression of class 2 flagellar operons. As a chaperone, effects FliD transition to the membrane by preventing its premature polymerization, and by directing it to the export apparatus. The chain is Flagellar protein FliT from Photorhabdus laumondii subsp. laumondii (strain DSM 15139 / CIP 105565 / TT01) (Photorhabdus luminescens subsp. laumondii).